We begin with the raw amino-acid sequence, 124 residues long: Large ribosomal subunit protein uL22 (124 aa).

This sequence belongs to the universal ribosomal protein uL22 family. Part of the 50S ribosomal subunit.

Its function is as follows. This protein binds specifically to 23S rRNA; its binding is stimulated by other ribosomal proteins, e.g. L4, L17, and L20. It is important during the early stages of 50S assembly. It makes multiple contacts with different domains of the 23S rRNA in the assembled 50S subunit and ribosome. Functionally, the globular domain of the protein is located near the polypeptide exit tunnel on the outside of the subunit, while an extended beta-hairpin is found that lines the wall of the exit tunnel in the center of the 70S ribosome. The sequence is that of Large ribosomal subunit protein uL22 from Campylobacter lari (strain RM2100 / D67 / ATCC BAA-1060).